Consider the following 313-residue polypeptide: Probable myosin light chain kinase DDB_G0292624 (313 aa).

One can recognise a Protein kinase domain in the interval 6 to 264 (YELHKEIGKG…AKQALEHPWI (259 aa)). Residues 12–20 (IGKGAFSVV) and K35 each bind ATP. The active-site Proton acceptor is D125.

It belongs to the protein kinase superfamily. CAMK Ser/Thr protein kinase family. CaMK subfamily.

The catalysed reaction is L-seryl-[myosin light chain] + ATP = O-phospho-L-seryl-[myosin light chain] + ADP + H(+). It catalyses the reaction L-threonyl-[myosin light chain] + ATP = O-phospho-L-threonyl-[myosin light chain] + ADP + H(+). With respect to regulation, does not have a calmodulin-binding domain. May phosphorylate a specific serine in the N-terminus of a myosin light chain. This Dictyostelium discoideum (Social amoeba) protein is Probable myosin light chain kinase DDB_G0292624.